Here is a 205-residue protein sequence, read N- to C-terminus: High frequency lysogenization protein HflD homolog (205 aa).

This sequence belongs to the HflD family.

The protein resides in the cytoplasm. Its subcellular location is the cell inner membrane. The sequence is that of High frequency lysogenization protein HflD homolog from Haemophilus influenzae (strain 86-028NP).